The primary structure comprises 325 residues: tRNA dimethylallyltransferase (325 aa).

17–24 (GPTASGKT) contributes to the ATP binding site. 19–24 (TASGKT) contacts substrate. Interaction with substrate tRNA stretches follow at residues 42 to 45 (DSAL), 166 to 170 (QRIQR), 251 to 256 (RCVGYR), and 284 to 291 (KRQITWLR).

The protein belongs to the IPP transferase family. In terms of assembly, monomer. Mg(2+) serves as cofactor.

It catalyses the reaction adenosine(37) in tRNA + dimethylallyl diphosphate = N(6)-dimethylallyladenosine(37) in tRNA + diphosphate. In terms of biological role, catalyzes the transfer of a dimethylallyl group onto the adenine at position 37 in tRNAs that read codons beginning with uridine, leading to the formation of N6-(dimethylallyl)adenosine (i(6)A). The protein is tRNA dimethylallyltransferase of Burkholderia multivorans (strain ATCC 17616 / 249).